The sequence spans 180 residues: ATP-dependent protease subunit HslV (180 aa).

T5 is a catalytic residue. The Na(+) site is built by G165, C168, and T171.

The protein belongs to the peptidase T1B family. HslV subfamily. In terms of assembly, a double ring-shaped homohexamer of HslV is capped on each side by a ring-shaped HslU homohexamer. The assembly of the HslU/HslV complex is dependent on binding of ATP.

Its subcellular location is the cytoplasm. The enzyme catalyses ATP-dependent cleavage of peptide bonds with broad specificity.. Allosterically activated by HslU binding. Its function is as follows. Protease subunit of a proteasome-like degradation complex believed to be a general protein degrading machinery. The protein is ATP-dependent protease subunit HslV of Helicobacter hepaticus (strain ATCC 51449 / 3B1).